A 393-amino-acid chain; its full sequence is Thermostable carboxypeptidase 2 (393 aa).

Residues His104, Asp109, and His245 each coordinate Zn(2+). Tyr302 serves as the catalytic Proton donor. Glu373 functions as the Nucleophile in the catalytic mechanism.

It belongs to the peptidase M20 family. As to quaternary structure, homotetramer. Zn(2+) serves as cofactor.

Its function is as follows. Can release basic, acidic, aromatic, and, to a lesser extent, aliphatic amino acids. This is Thermostable carboxypeptidase 2 (cpsA2) from Saccharolobus solfataricus (strain ATCC 35092 / DSM 1617 / JCM 11322 / P2) (Sulfolobus solfataricus).